Here is a 161-residue protein sequence, read N- to C-terminus: MIKVDTSDALLKNSLTSIKWTLNMLDILFSCDIFSLIKDSIRSLITETFSSVNTVSTSTVKPVRLLCCLVCSNSKSCTISNITRDPESECDKGSRILETDPSFSNGYITLNRFLKYSSFIICFLCLVLTNLMKHSSQNFSFLDSTVAGFLADAGHLWHSIT.

This is an uncharacterized protein from Saccharomyces cerevisiae (strain ATCC 204508 / S288c) (Baker's yeast).